The chain runs to 560 residues: Exonuclease subunit 2 (560 aa).

Position 36-43 (36-43 (GRNGGGKS)) interacts with ATP.

It to phage T5 protein D13 and to yeast RAD52. As to quaternary structure, consists of two subunits: gp46 and gp47.

Its function is as follows. Exonuclease that plays a role in viral genome replication, DNA recombination, and host DNA degradation. The sequence is that of Exonuclease subunit 2 (46) from Enterobacteria phage T4 (Bacteriophage T4).